Here is a 453-residue protein sequence, read N- to C-terminus: Cobyrinate a,c-diamide synthase (453 aa).

The region spanning 250 to 440 is the GATase cobBQ-type domain; the sequence is RIAVPFDEAF…IHTHTACLPD (191 aa). Cys-332 acts as the Nucleophile in catalysis.

The protein belongs to the CobB/CbiA family. Requires Mg(2+) as cofactor.

It catalyses the reaction cob(II)yrinate + 2 L-glutamine + 2 ATP + 2 H2O = cob(II)yrinate a,c diamide + 2 L-glutamate + 2 ADP + 2 phosphate + 2 H(+). It carries out the reaction Ni-sirohydrochlorin + 2 L-glutamine + 2 ATP + 2 H2O = Ni-sirohydrochlorin a,c-diamide + 2 L-glutamate + 2 ADP + 2 phosphate + 2 H(+). The protein operates within cofactor biosynthesis; adenosylcobalamin biosynthesis; cob(II)yrinate a,c-diamide from sirohydrochlorin (anaerobic route): step 10/10. Its function is as follows. Catalyzes the ATP-dependent amidation of the two carboxylate groups at positions a and c of cobyrinate, using either L-glutamine or ammonia as the nitrogen source. Involved in the biosynthesis of the unique nickel-containing tetrapyrrole coenzyme F430, the prosthetic group of methyl-coenzyme M reductase (MCR), which plays a key role in methanogenesis and anaerobic methane oxidation. Catalyzes the ATP-dependent amidation of the two carboxylate groups at positions a and c of Ni-sirohydrochlorin, using L-glutamine or ammonia as the nitrogen source. The chain is Cobyrinate a,c-diamide synthase from Methanosphaera stadtmanae (strain ATCC 43021 / DSM 3091 / JCM 11832 / MCB-3).